The sequence spans 460 residues: Metal cation symporter ZIP8 (460 aa).

The signal sequence occupies residues 1-22 (MAPGRAVAGLLLLAAAGLGGVA). At 23 to 132 (EGPGLAFSED…PSHSEVWGYG (110 aa)) the chain is on the extracellular side. 2 N-linked (GlcNAc...) asparagine glycosylation sites follow: N40 and N88. A helical membrane pass occupies residues 133–153 (FLSVTIINLASLLGLILTPLI). At 154 to 160 (KKSYFPK) the chain is on the cytoplasmic side. The chain crosses the membrane as a helical span at residues 161-181 (ILTFFVGLAIGTLFSNAIFQL). Topologically, residues 182-191 (IPEAFGFDPK) are extracellular. Residues 192–212 (VDSYVEKAVAVFGGFYLLFFF) traverse the membrane as a helical segment. Topologically, residues 213 to 365 (ERMLKMLLKT…LNAGMSTRQA (153 aa)) are cytoplasmic. The short motif at 343 to 348 (EEFPHE) is the XEXPHE-motif element. The helical transmembrane segment at 366–386 (LLFNFLSACSCYVGLAFGILV) threads the bilayer. Over 387-388 (GN) the chain is Extracellular. The chain crosses the membrane as a helical span at residues 389–409 (NFAPNIIFALAGGMFLYISLA). Over 410–429 (DMFPEMNDMLREKVTGRKTD) the chain is Cytoplasmic. Residues 430–450 (FTFFMIQNAGMLTGFTAILLI) form a helical membrane-spanning segment. The Extracellular segment spans residues 451–460 (TLYAGEIELE).

It belongs to the ZIP transporter (TC 2.A.5) family. As to quaternary structure, homodimer. N-glycosylated. N-glycosylation is not required for proper iron and zinc transport. Ubiquitously expressed. Expressed in thymus, placenta, lung, liver, pancreas, salivary gland and, to a lower extent, in spleen, testis, ovary, small intestine, colon, leukocyte, heart. Highest expression is observed in pancreas. Expressed by macrophages (at protein level). Expressed by microvascular capillary endothelial cells that constitute the blood-brain barrier (at protein level).

The protein localises to the cell membrane. The protein resides in the lysosome membrane. It localises to the apical cell membrane. It is found in the basolateral cell membrane. It catalyses the reaction Zn(2+)(out) + 2 hydrogencarbonate(out) = Zn(2+)(in) + 2 hydrogencarbonate(in). The catalysed reaction is selenite(out) + Zn(2+)(out) + hydrogencarbonate(out) = selenite(in) + Zn(2+)(in) + hydrogencarbonate(in). The enzyme catalyses Mn(2+)(out) + 2 hydrogencarbonate(out) = Mn(2+)(in) + 2 hydrogencarbonate(in). It carries out the reaction Fe(2+)(out) + 2 hydrogencarbonate(out) = Fe(2+)(in) + 2 hydrogencarbonate(in). It catalyses the reaction Cd(2+)(out) + 2 hydrogencarbonate(out) = Cd(2+)(in) + 2 hydrogencarbonate(in). The catalysed reaction is Co(2+)(out) + 2 hydrogencarbonate(out) = Co(2+)(in) + 2 hydrogencarbonate(in). Functionally, electroneutral divalent metal cation:bicarbonate symporter of the plasma membrane mediating the cellular uptake of zinc and manganese, two divalent metal cations important for development, tissue homeostasis and immunity. Transports an electroneutral complex composed of a divalent metal cation and two bicarbonate anions or alternatively a bicarbonate and a selenite anion. Thereby, it also contributes to the cellular uptake of selenium, an essential trace metal and micronutrient. Also imports cadmium a non-essential metal which is cytotoxic and carcinogenic. May also transport iron and cobalt through membranes. Through zinc import, indirectly regulates the metal-dependent transcription factor MTF1 and the expression of some metalloproteases involved in cartilage catabolism and also probably heart development. Also indirectly regulates the expression of proteins involved in cell morphology and cytoskeleton organization. Indirectly controls innate immune function and inflammatory response by regulating zinc cellular uptake which in turn modulates the expression of genes specific of these processes. Protects, for instance, cells from injury and death at the onset of inflammation. By regulating zinc influx into monocytes also directly modulates their adhesion to endothelial cells and arteries. Reclaims manganese from the bile at the apical membrane of hepatocytes, thereby regulating the activity of the manganese-dependent enzymes through the systemic levels of the nutrient. Also participates in manganese reabsorption in the proximal tubule of the kidney. By mediating the extracellular uptake of manganese by cells of the blood-brain barrier, may also play a role in the transport of the micronutrient to the brain. With manganese cellular uptake also participates in mitochondrial proper function. Finally, also probably functions intracellularly, translocating zinc from lysosome to cytosol to indirectly enhance the expression of specific genes during TCR-mediated T cell activation. The sequence is that of Metal cation symporter ZIP8 from Homo sapiens (Human).